Here is a 181-residue protein sequence, read N- to C-terminus: Adenine phosphoribosyltransferase 2 (181 aa).

S2 carries the post-translational modification N-acetylserine.

This sequence belongs to the purine/pyrimidine phosphoribosyltransferase family.

It is found in the cytoplasm. The enzyme catalyses AMP + diphosphate = 5-phospho-alpha-D-ribose 1-diphosphate + adenine. It participates in purine metabolism; AMP biosynthesis via salvage pathway; AMP from adenine: step 1/1. Its function is as follows. Catalyzes a salvage reaction resulting in the formation of AMP, that is energically less costly than de novo synthesis. May lack catalytic activity. This chain is Adenine phosphoribosyltransferase 2 (APT2), found in Saccharomyces cerevisiae (strain ATCC 204508 / S288c) (Baker's yeast).